A 364-amino-acid polypeptide reads, in one-letter code: Probable 7-methylxanthine methyltransferase 5 (364 aa).

Y19 serves as a coordination point for S-adenosyl-L-homocysteine. A theobromine-binding site is contributed by T26. S-adenosyl-L-homocysteine-binding residues include C64, Q69, D101, L102, S134, and F135. Theobromine is bound by residues Y152, H155, and W156. Residues N172, D258, F260, and N261 each coordinate Mg(2+). A theobromine-binding site is contributed by F314.

Belongs to the methyltransferase superfamily. Type-7 methyltransferase family. Requires Mg(2+) as cofactor.

The catalysed reaction is 7-methylxanthine + S-adenosyl-L-methionine = theobromine + S-adenosyl-L-homocysteine + H(+). It participates in alkaloid biosynthesis. Functionally, involved in the biosynthesis of theobromine. This Theobroma cacao (Cacao) protein is Probable 7-methylxanthine methyltransferase 5.